The following is a 360-amino-acid chain: Peptide chain release factor 1 (360 aa).

Q235 carries the N5-methylglutamine modification. A disordered region spans residues 284–313 (AKRQQAEASTRRNLLGSGDRSDRNRTYNFP).

The protein belongs to the prokaryotic/mitochondrial release factor family. Methylated by PrmC. Methylation increases the termination efficiency of RF1.

It is found in the cytoplasm. In terms of biological role, peptide chain release factor 1 directs the termination of translation in response to the peptide chain termination codons UAG and UAA. This is Peptide chain release factor 1 from Salmonella agona (strain SL483).